The chain runs to 141 residues: Large ribosomal subunit protein uL11 (141 aa).

It belongs to the universal ribosomal protein uL11 family. In terms of assembly, part of the ribosomal stalk of the 50S ribosomal subunit. Interacts with L10 and the large rRNA to form the base of the stalk. L10 forms an elongated spine to which L12 dimers bind in a sequential fashion forming a multimeric L10(L12)X complex. In terms of processing, one or more lysine residues are methylated.

In terms of biological role, forms part of the ribosomal stalk which helps the ribosome interact with GTP-bound translation factors. The polypeptide is Large ribosomal subunit protein uL11 (Syntrophomonas wolfei subsp. wolfei (strain DSM 2245B / Goettingen)).